The following is a 301-amino-acid chain: Mycothiol acetyltransferase (301 aa).

N-acetyltransferase domains lie at Val-7 to Asp-150 and Val-152 to Gly-301. Asp-39 is a binding site for 1D-myo-inositol 2-(L-cysteinylamino)-2-deoxy-alpha-D-glucopyranoside. Acetyl-CoA contacts are provided by residues Leu-80 to Val-82 and Arg-88 to Ser-93. 1D-myo-inositol 2-(L-cysteinylamino)-2-deoxy-alpha-D-glucopyranoside contacts are provided by Glu-179, Lys-220, and Glu-228. Residue Val-232–Val-234 coordinates acetyl-CoA. Residue Tyr-271 coordinates 1D-myo-inositol 2-(L-cysteinylamino)-2-deoxy-alpha-D-glucopyranoside. Asn-276–Lys-281 is a binding site for acetyl-CoA.

It belongs to the acetyltransferase family. MshD subfamily. In terms of assembly, monomer.

It carries out the reaction 1D-myo-inositol 2-(L-cysteinylamino)-2-deoxy-alpha-D-glucopyranoside + acetyl-CoA = mycothiol + CoA + H(+). Functionally, catalyzes the transfer of acetyl from acetyl-CoA to desacetylmycothiol (Cys-GlcN-Ins) to form mycothiol. The polypeptide is Mycothiol acetyltransferase (Mycolicibacterium vanbaalenii (strain DSM 7251 / JCM 13017 / BCRC 16820 / KCTC 9966 / NRRL B-24157 / PYR-1) (Mycobacterium vanbaalenii)).